The chain runs to 185 residues: Ribosome-recycling factor (185 aa).

This sequence belongs to the RRF family.

It is found in the cytoplasm. Responsible for the release of ribosomes from messenger RNA at the termination of protein biosynthesis. May increase the efficiency of translation by recycling ribosomes from one round of translation to another. Functionally, plays a role in sporulation. The protein is Ribosome-recycling factor of Bacillus subtilis (strain 168).